We begin with the raw amino-acid sequence, 1131 residues long: Probable secreted beta-glucosidase adg3 (1131 aa).

The N-terminal stretch at 1 to 23 (MPSKIEKICLLLLGFTAASNVNA) is a signal peptide. Asn-58, Asn-123, Asn-252, Asn-551, Asn-593, Asn-631, and Asn-689 each carry an N-linked (GlcNAc...) asparagine glycan. Residues 609–819 (GTTSSTSEIV…SSPISSNSVT (211 aa)) are disordered. Low complexity predominate over residues 623–715 (SNSNTGSLNG…YSDPTTTITS (93 aa)). Residues 716–725 (EVSSILSSPT) are compositionally biased toward polar residues. The segment covering 726–737 (SMQSSVSRPQSS) has biased composition (low complexity). Residues 738 to 763 (GDASGFNTIFTSISQSSDGETSGYTI) are compositionally biased toward polar residues. Low complexity-rich tracts occupy residues 764 to 773 (SSNSSQNSAS) and 780 to 819 (TSSS…NSVT). N-linked (GlcNAc...) asparagine glycosylation is found at Asn-766, Asn-806, and Asn-857. A compositionally biased stretch (low complexity) spans 893–909 (STSNSGSTSYSIPSSSS). Residues 893 to 918 (STSNSGSTSYSIPSSSSRNEGTTSYS) form a disordered region. A glycan (N-linked (GlcNAc...) asparagine) is linked at Asn-920. Low complexity predominate over residues 977 to 1027 (LTVKPESSLSSSTTSGLTSSSSTIPSSTRSESNSESASTSSASKRSSSSTS). A disordered region spans residues 977 to 1031 (LTVKPESSLSSSTTSGLTSSSSTIPSSTRSESNSESASTSSASKRSSSSTSLVQS).

Belongs to the SUN family.

It is found in the secreted. Cell surface beta-glucosidase involved in cell wall biogenesis,. The polypeptide is Probable secreted beta-glucosidase adg3 (adg3) (Schizosaccharomyces pombe (strain 972 / ATCC 24843) (Fission yeast)).